A 314-amino-acid chain; its full sequence is MKIILANPRGFCAGVDRAISIVELALEIHGAPIYVRHEVVHNRFVVNGLRERGAVFVEELNEVPDGAIVIFSAHGVSQAVRQEAKNRNLKVFDATCPLVTKVHMQVARASRKGTKAILIGHEGHPEVQGTMGQYDNPEGGIFLVENVEDIAKLGLKDNEELTFMTQTTLSIDDTSDVIVALKAKYPAIQGPRKNDICYATTNRQQAVRELAEQSDLVIVVGSKNSSNSNRLAELASRMGVPAKLIDDSNDIEPDWLKGINTIGVTAGASAPEVLVQSVIARLKELGVDSVEELEGCEENTVFEVPKELRIKEVG.

Position 12 (cysteine 12) interacts with [4Fe-4S] cluster. Residues histidine 41 and histidine 74 each contribute to the (2E)-4-hydroxy-3-methylbut-2-enyl diphosphate site. 2 residues coordinate dimethylallyl diphosphate: histidine 41 and histidine 74. Residues histidine 41 and histidine 74 each contribute to the isopentenyl diphosphate site. Cysteine 96 contributes to the [4Fe-4S] cluster binding site. Histidine 124 contacts (2E)-4-hydroxy-3-methylbut-2-enyl diphosphate. Dimethylallyl diphosphate is bound at residue histidine 124. An isopentenyl diphosphate-binding site is contributed by histidine 124. Glutamate 126 serves as the catalytic Proton donor. Residue threonine 167 coordinates (2E)-4-hydroxy-3-methylbut-2-enyl diphosphate. Residue cysteine 197 participates in [4Fe-4S] cluster binding. Residues serine 225, serine 226, asparagine 227, and serine 269 each contribute to the (2E)-4-hydroxy-3-methylbut-2-enyl diphosphate site. 4 residues coordinate dimethylallyl diphosphate: serine 225, serine 226, asparagine 227, and serine 269. Serine 225, serine 226, asparagine 227, and serine 269 together coordinate isopentenyl diphosphate.

The protein belongs to the IspH family. It depends on [4Fe-4S] cluster as a cofactor.

It carries out the reaction isopentenyl diphosphate + 2 oxidized [2Fe-2S]-[ferredoxin] + H2O = (2E)-4-hydroxy-3-methylbut-2-enyl diphosphate + 2 reduced [2Fe-2S]-[ferredoxin] + 2 H(+). The catalysed reaction is dimethylallyl diphosphate + 2 oxidized [2Fe-2S]-[ferredoxin] + H2O = (2E)-4-hydroxy-3-methylbut-2-enyl diphosphate + 2 reduced [2Fe-2S]-[ferredoxin] + 2 H(+). It functions in the pathway isoprenoid biosynthesis; dimethylallyl diphosphate biosynthesis; dimethylallyl diphosphate from (2E)-4-hydroxy-3-methylbutenyl diphosphate: step 1/1. The protein operates within isoprenoid biosynthesis; isopentenyl diphosphate biosynthesis via DXP pathway; isopentenyl diphosphate from 1-deoxy-D-xylulose 5-phosphate: step 6/6. Catalyzes the conversion of 1-hydroxy-2-methyl-2-(E)-butenyl 4-diphosphate (HMBPP) into a mixture of isopentenyl diphosphate (IPP) and dimethylallyl diphosphate (DMAPP). Acts in the terminal step of the DOXP/MEP pathway for isoprenoid precursor biosynthesis. The sequence is that of 4-hydroxy-3-methylbut-2-enyl diphosphate reductase from Mannheimia succiniciproducens (strain KCTC 0769BP / MBEL55E).